The primary structure comprises 29 residues: MSTDLKFSLVTTIIVLGLIVAVGLTAALH.

A helical membrane pass occupies residues 7–27 (FSLVTTIIVLGLIVAVGLTAA).

Its subcellular location is the cell inner membrane. This is an uncharacterized protein from Escherichia coli O6:K15:H31 (strain 536 / UPEC).